Consider the following 113-residue polypeptide: Large ribosomal subunit protein bL17 (113 aa).

This sequence belongs to the bacterial ribosomal protein bL17 family. As to quaternary structure, part of the 50S ribosomal subunit. Contacts protein L32.

This is Large ribosomal subunit protein bL17 from Clostridium beijerinckii (strain ATCC 51743 / NCIMB 8052) (Clostridium acetobutylicum).